A 573-amino-acid polypeptide reads, in one-letter code: 2-succinyl-5-enolpyruvyl-6-hydroxy-3-cyclohexene-1-carboxylate synthase (573 aa).

It belongs to the TPP enzyme family. MenD subfamily. Homodimer. Requires Mg(2+) as cofactor. Mn(2+) is required as a cofactor. The cofactor is thiamine diphosphate.

The catalysed reaction is isochorismate + 2-oxoglutarate + H(+) = 5-enolpyruvoyl-6-hydroxy-2-succinyl-cyclohex-3-ene-1-carboxylate + CO2. It functions in the pathway quinol/quinone metabolism; 1,4-dihydroxy-2-naphthoate biosynthesis; 1,4-dihydroxy-2-naphthoate from chorismate: step 2/7. The protein operates within quinol/quinone metabolism; menaquinone biosynthesis. Catalyzes the thiamine diphosphate-dependent decarboxylation of 2-oxoglutarate and the subsequent addition of the resulting succinic semialdehyde-thiamine pyrophosphate anion to isochorismate to yield 2-succinyl-5-enolpyruvyl-6-hydroxy-3-cyclohexene-1-carboxylate (SEPHCHC). The sequence is that of 2-succinyl-5-enolpyruvyl-6-hydroxy-3-cyclohexene-1-carboxylate synthase from Shewanella baltica (strain OS155 / ATCC BAA-1091).